The following is a 551-amino-acid chain: Rqc2 homolog RqcH (551 aa).

The segment at 363 to 551 (YQKLKEAVKY…SKKIASMKKS (189 aa)) is required for fibronectin binding.

The protein belongs to the NEMF family. In terms of assembly, associates with stalled 50S ribosomal subunits, binds to RqcP. Interacts with human fibronectin.

Its subcellular location is the cell surface. The protein localises to the cytoplasm. In terms of biological role, key component of the ribosome quality control system (RQC), a ribosome-associated complex that mediates the extraction of incompletely synthesized nascent chains from stalled ribosomes and their subsequent degradation. RqcH recruits Ala-charged tRNA, and with RqcP directs the elongation of stalled nascent chains on 50S ribosomal subunits, leading to non-templated C-terminal alanine extensions (Ala tail). The Ala tail promotes nascent chain degradation. May add between 1 and at least 8 Ala residues. Binds to stalled 50S ribosomal subunits. Functionally, recombinant protein binds to immobilized human fibronectin; binding is saturable and competed by heparin. Recombinant protein inhibits binding of whole cells to fibronectin. The protein is Rqc2 homolog RqcH of Streptococcus pneumoniae (strain ATCC BAA-255 / R6).